Here is a 118-residue protein sequence, read N- to C-terminus: Large ribosomal subunit protein uL18 (118 aa).

This sequence belongs to the universal ribosomal protein uL18 family. Part of the 50S ribosomal subunit; part of the 5S rRNA/L5/L18/L25 subcomplex. Contacts the 5S and 23S rRNAs.

Its function is as follows. This is one of the proteins that bind and probably mediate the attachment of the 5S RNA into the large ribosomal subunit, where it forms part of the central protuberance. This is Large ribosomal subunit protein uL18 from Campylobacter jejuni subsp. jejuni serotype O:6 (strain 81116 / NCTC 11828).